Here is a 217-residue protein sequence, read N- to C-terminus: Adenylate kinase (217 aa).

12–17 is an ATP binding site; the sequence is GAGKGS. The interval 32 to 61 is NMP; that stretch reads STGDMFRTHIKGSTPLGLEAKKYTDQGLLV. Residues threonine 33, arginine 38, 59–61, 87–90, and glutamine 94 contribute to the AMP site; these read LLV and GYPR. The tract at residues 128–165 is LID; the sequence is GRRTCPVCGAIYHVDNYPPKVAGICDNDGATLVQRKDD. Residue arginine 129 coordinates ATP. Residues cysteine 132 and cysteine 135 each contribute to the Zn(2+) site. 138–139 lines the ATP pocket; sequence IY. Cysteine 152 and aspartate 155 together coordinate Zn(2+). Positions 162 and 173 each coordinate AMP. Glutamine 201 is a binding site for ATP.

Belongs to the adenylate kinase family. In terms of assembly, monomer.

The protein resides in the cytoplasm. The enzyme catalyses AMP + ATP = 2 ADP. It participates in purine metabolism; AMP biosynthesis via salvage pathway; AMP from ADP: step 1/1. Its function is as follows. Catalyzes the reversible transfer of the terminal phosphate group between ATP and AMP. Plays an important role in cellular energy homeostasis and in adenine nucleotide metabolism. In Acholeplasma laidlawii (strain PG-8A), this protein is Adenylate kinase.